The following is a 777-amino-acid chain: Ribosome-releasing factor 2, mitochondrial (777 aa).

Positions 68–353 (AKIRNIGIMA…AVTMYLPSPE (286 aa)) constitute a tr-type G domain. GTP is bound by residues 77-84 (AHIDAGKT), 141-145 (DTPGH), and 195-198 (NKMD).

This sequence belongs to the TRAFAC class translation factor GTPase superfamily. Classic translation factor GTPase family. EF-G/EF-2 subfamily.

The protein localises to the mitochondrion. It catalyses the reaction GTP + H2O = GDP + phosphate + H(+). In terms of biological role, mitochondrial GTPase that mediates the disassembly of ribosomes from messenger RNA at the termination of mitochondrial protein biosynthesis. Acts in collaboration with MRRF. GTP hydrolysis follows the ribosome disassembly and probably occurs on the ribosome large subunit. Not involved in the GTP-dependent ribosomal translocation step during translation elongation. The polypeptide is Ribosome-releasing factor 2, mitochondrial (Pongo abelii (Sumatran orangutan)).